An 88-amino-acid chain; its full sequence is UPF0297 protein STER_1937 (88 aa).

This sequence belongs to the UPF0297 family.

This chain is UPF0297 protein STER_1937, found in Streptococcus thermophilus (strain ATCC BAA-491 / LMD-9).